We begin with the raw amino-acid sequence, 115 residues long: Regulator of ribonuclease activity B (115 aa).

It belongs to the RraB family. As to quaternary structure, interacts with the C-terminal region of Rne.

It is found in the cytoplasm. In terms of biological role, globally modulates RNA abundance by binding to RNase E (Rne) and regulating its endonucleolytic activity. Can modulate Rne action in a substrate-dependent manner by altering the composition of the degradosome. The protein is Regulator of ribonuclease activity B of Aeromonas salmonicida (strain A449).